The chain runs to 452 residues: Maltoporin (452 aa).

The signal sequence occupies residues 1–25 (MMITLRKLPLAVAVAAGVMSAQAMA).

The protein belongs to the porin LamB (TC 1.B.3) family. As to quaternary structure, homotrimer formed of three 18-stranded antiparallel beta-barrels, containing three independent channels.

It is found in the cell outer membrane. It catalyses the reaction beta-maltose(in) = beta-maltose(out). In terms of biological role, involved in the transport of maltose and maltodextrins. This Salmonella paratyphi A (strain ATCC 9150 / SARB42) protein is Maltoporin.